The sequence spans 84 residues: Cell division topological specificity factor (84 aa).

The protein belongs to the MinE family.

Functionally, prevents the cell division inhibition by proteins MinC and MinD at internal division sites while permitting inhibition at polar sites. This ensures cell division at the proper site by restricting the formation of a division septum at the midpoint of the long axis of the cell. In Pseudomonas entomophila (strain L48), this protein is Cell division topological specificity factor.